A 114-amino-acid chain; its full sequence is Small ribosomal subunit protein bS6 (114 aa).

It belongs to the bacterial ribosomal protein bS6 family.

Its function is as follows. Binds together with bS18 to 16S ribosomal RNA. This Protochlamydia amoebophila (strain UWE25) protein is Small ribosomal subunit protein bS6.